The sequence spans 306 residues: Ribonuclease Z (306 aa).

Zn(2+) is bound by residues His-63, His-65, Asp-67, His-68, His-140, Asp-211, and His-269. Catalysis depends on Asp-67, which acts as the Proton acceptor.

The protein belongs to the RNase Z family. As to quaternary structure, homodimer. It depends on Zn(2+) as a cofactor.

It carries out the reaction Endonucleolytic cleavage of RNA, removing extra 3' nucleotides from tRNA precursor, generating 3' termini of tRNAs. A 3'-hydroxy group is left at the tRNA terminus and a 5'-phosphoryl group is left at the trailer molecule.. Its function is as follows. Zinc phosphodiesterase, which displays some tRNA 3'-processing endonuclease activity. Probably involved in tRNA maturation, by removing a 3'-trailer from precursor tRNA. The sequence is that of Ribonuclease Z from Listeria innocua serovar 6a (strain ATCC BAA-680 / CLIP 11262).